The primary structure comprises 158 residues: Protein-export protein SecB (158 aa).

The protein belongs to the SecB family. Homotetramer, a dimer of dimers. One homotetramer interacts with 1 SecA dimer.

It localises to the cytoplasm. Its function is as follows. One of the proteins required for the normal export of preproteins out of the cell cytoplasm. It is a molecular chaperone that binds to a subset of precursor proteins, maintaining them in a translocation-competent state. It also specifically binds to its receptor SecA. The polypeptide is Protein-export protein SecB (Photorhabdus laumondii subsp. laumondii (strain DSM 15139 / CIP 105565 / TT01) (Photorhabdus luminescens subsp. laumondii)).